Here is a 162-residue protein sequence, read N- to C-terminus: Lipid droplet assembly factor 1-A (162 aa).

Topologically, residues 1-42 (MASAENLYQEKMQELQKQMNKVMQTINNHSKVEAFLNSPFGQ) are cytoplasmic. Residues 43–63 (YLDQHPFVTLSLLVFISLSAV) form a helical membrane-spanning segment. Topologically, residues 64–65 (PV) are lumenal. Residues 66–86 (GIFLTLIAGTAIAVCLAVLII) traverse the membrane as a helical segment. E87 is a topological domain (cytoplasmic). Residues 88-108 (GIVISVGGIALLCILCGLAVM) form a helical membrane-spanning segment. A topological domain (lumenal) is located at residue S109. Residues 110-130 (LGVAAVLCVSYVAGSSVLNYI) traverse the membrane as a helical segment. Over 131-162 (HAYRVTVGTRGRSGPISLNHETTTAEKSYRSS) the chain is Cytoplasmic.

It belongs to the LDAF1 family.

Its subcellular location is the endoplasmic reticulum membrane. The protein localises to the lipid droplet. Plays an important role in the formation of lipid droplets (LD) which are storage organelles at the center of lipid and energy homeostasis. The chain is Lipid droplet assembly factor 1-A from Xenopus laevis (African clawed frog).